A 569-amino-acid polypeptide reads, in one-letter code: Toxin YxiD (569 aa).

Positions 1–235 (MKTLDVHALH…NPQMKQADDS (235 aa)) constitute an LXG domain. The stretch at 8–91 (ALHEGIQHTI…QHAISSVESN (84 aa)) forms a coiled coil. A disordered region spans residues 548 to 569 (HQAGIHGTGSPANELFKGGKKK).

In the N-terminal section; belongs to the LXG family. Probably interacts with cognate immunity protein YxxD but not with non-cognate immunity proteins. The interaction inhibits the toxic activity of YxxD.

The protein resides in the secreted. In terms of biological role, toxic component of one of 6 LXG toxin-immunity modules in this strain. They promote kin selection, mediate competition in biofilms, and drive spatial segregation of different strains, indicating that LXG toxins may help avoid warfare between strains in biofilms. Mediates intercellular competition during biofilm formation; disruption of the operon disadvantages the bacteria, but overexpression of the cognate immunity protein restores growth in competition with wild-type. Overexpression alone in situ causes growth arrest but not cell lysis, a large decrease in chromosomal DNA content and the production of anucleate cells. No effect is seen on rRNA. Co-overexpression with cognate immunity protein YxxD does not cause growth arrest. The toxic effect is not dependent on the epsA and tapA operons which are required for biofilm formation. The sequence is that of Toxin YxiD (yxiD) from Bacillus subtilis (strain 168).